The following is a 282-amino-acid chain: MSLFEALILGIVQGLTEFLPISSTAHLRIIPALAGWNDPGAAFTAIVQMGTLAAVLIYFRSDIVCIVKAVVDGLLKGKPLNTPDATMGWMIAAGTIPIVFFGLLFKDAIETTLRSLYWISAALIGLALILWLTEVRLKQRVAKHLPLKSMEEIGWKEALLIGVAQSIALIPGSSRSGTTITGGLLLNLSREAAARFSFLLSLPSVLAAALLQLYETRHSLLASPSELTNLLVATIAAGVVGYASIAFLITYLKEHSTSVFIIYRIVIGVAILGLIATGAIQP.

7 helical membrane passes run 39–59, 85–105, 115–135, 153–173, 196–216, 230–250, and 260–280; these read PGAA…LIYF, ATMG…GLLF, SLYW…LTEV, IGWK…IPGS, FSFL…LYET, LLVA…FLIT, and FIIY…TGAI.

The protein belongs to the UppP family.

The protein resides in the cell inner membrane. The catalysed reaction is di-trans,octa-cis-undecaprenyl diphosphate + H2O = di-trans,octa-cis-undecaprenyl phosphate + phosphate + H(+). Catalyzes the dephosphorylation of undecaprenyl diphosphate (UPP). Confers resistance to bacitracin. The polypeptide is Undecaprenyl-diphosphatase (Chlorobium chlorochromatii (strain CaD3)).